The following is a 307-amino-acid chain: Mycothiol acetyltransferase (307 aa).

N-acetyltransferase domains lie at 12 to 157 and 160 to 307; these read TRTD…PPLP and VTLR…YQLG. Glu43 contributes to the 1D-myo-inositol 2-(L-cysteinylamino)-2-deoxy-alpha-D-glucopyranoside binding site. 87–89 contacts acetyl-CoA; it reads LAV. The 1D-myo-inositol 2-(L-cysteinylamino)-2-deoxy-alpha-D-glucopyranoside site is built by Glu187, Lys227, and Glu239. Acetyl-CoA-binding positions include 243 to 245 and 250 to 256; these read LGV and HGGGLGK. A 1D-myo-inositol 2-(L-cysteinylamino)-2-deoxy-alpha-D-glucopyranoside-binding site is contributed by Tyr278.

This sequence belongs to the acetyltransferase family. MshD subfamily. As to quaternary structure, monomer.

It carries out the reaction 1D-myo-inositol 2-(L-cysteinylamino)-2-deoxy-alpha-D-glucopyranoside + acetyl-CoA = mycothiol + CoA + H(+). In terms of biological role, catalyzes the transfer of acetyl from acetyl-CoA to desacetylmycothiol (Cys-GlcN-Ins) to form mycothiol. This Salinispora tropica (strain ATCC BAA-916 / DSM 44818 / JCM 13857 / NBRC 105044 / CNB-440) protein is Mycothiol acetyltransferase.